The following is a 505-amino-acid chain: MSEKYIVAIDQGTTSTRAIVFDHSGSIVSTGQLEHEQIFPRAGWVEHDPMEIWRNTREVIGQALSKADITRHDVEAVGITNQRETAVVWDRTTGKPVYNAIVWQDTRTQKIVDRLAADGGVERFKPTVGLPLATYFSGTKIVWILENVDGAREKAEAGELMFGTTDTWVLWNLTGGTDGGVHVTDVTNASRTLFMDLETLQWDDEILKAFDVPRSMLPEIKSSSEVYGQVESSSLLREVPIAGILGDQQAATFGQAAFDQGESKNTYGTGNFLIFNTGTDIIHSQNGLLTTLGYKLGDQEPHYALEGSIAVTGSLVQWMRDNLGLVSSAAEIETLAATVEDNGGVYFVPAFSGLFAPYWRSDARGALVGLTRYVNKGHIARAALEATAFQTREVLDAVNADSGVDLTELKVDGGMIANNLLMQFQADILGVPVVRPVVAETTALGAAYAAGLAVGFWKDLDDLRQNWQEDSRWTPDMDDAERERQLRLWKKAVTKTFDWVDDDVQ.

Position 13 (Thr-13) interacts with ADP. Residues Thr-13, Thr-14, and Ser-15 each coordinate ATP. Thr-13 lines the sn-glycerol 3-phosphate pocket. An ADP-binding site is contributed by Arg-17. Positions 83, 84, 135, and 247 each coordinate sn-glycerol 3-phosphate. Glycerol is bound by residues Arg-83, Glu-84, Tyr-135, Asp-247, and Gln-248. Thr-269 and Gly-313 together coordinate ADP. The ATP site is built by Thr-269, Gly-313, Gln-317, and Gly-414. 2 residues coordinate ADP: Gly-414 and Asn-418.

Belongs to the FGGY kinase family.

It catalyses the reaction glycerol + ATP = sn-glycerol 3-phosphate + ADP + H(+). The protein operates within polyol metabolism; glycerol degradation via glycerol kinase pathway; sn-glycerol 3-phosphate from glycerol: step 1/1. Inhibited by fructose 1,6-bisphosphate (FBP). Key enzyme in the regulation of glycerol uptake and metabolism. Catalyzes the phosphorylation of glycerol to yield sn-glycerol 3-phosphate. The polypeptide is Glycerol kinase (Clavibacter michiganensis subsp. michiganensis (strain NCPPB 382)).